Here is a 210-residue protein sequence, read N- to C-terminus: ATP-dependent Clp protease proteolytic subunit (210 aa).

The Nucleophile role is filled by S107. Residue H132 is part of the active site.

This sequence belongs to the peptidase S14 family. Fourteen ClpP subunits assemble into 2 heptameric rings which stack back to back to give a disk-like structure with a central cavity, resembling the structure of eukaryotic proteasomes.

The protein resides in the cytoplasm. It carries out the reaction Hydrolysis of proteins to small peptides in the presence of ATP and magnesium. alpha-casein is the usual test substrate. In the absence of ATP, only oligopeptides shorter than five residues are hydrolyzed (such as succinyl-Leu-Tyr-|-NHMec, and Leu-Tyr-Leu-|-Tyr-Trp, in which cleavage of the -Tyr-|-Leu- and -Tyr-|-Trp bonds also occurs).. Functionally, cleaves peptides in various proteins in a process that requires ATP hydrolysis. Has a chymotrypsin-like activity. Plays a major role in the degradation of misfolded proteins. This chain is ATP-dependent Clp protease proteolytic subunit, found in Zymomonas mobilis subsp. mobilis (strain ATCC 31821 / ZM4 / CP4).